The primary structure comprises 275 residues: Putative phosphoenolpyruvate synthase regulatory protein (275 aa).

157 to 164 provides a ligand contact to ADP; that stretch reads GVSRCGKT.

This sequence belongs to the pyruvate, phosphate/water dikinase regulatory protein family. PSRP subfamily.

The enzyme catalyses [pyruvate, water dikinase] + ADP = [pyruvate, water dikinase]-phosphate + AMP + H(+). The catalysed reaction is [pyruvate, water dikinase]-phosphate + phosphate + H(+) = [pyruvate, water dikinase] + diphosphate. Its function is as follows. Bifunctional serine/threonine kinase and phosphorylase involved in the regulation of the phosphoenolpyruvate synthase (PEPS) by catalyzing its phosphorylation/dephosphorylation. The sequence is that of Putative phosphoenolpyruvate synthase regulatory protein from Bordetella pertussis (strain Tohama I / ATCC BAA-589 / NCTC 13251).